We begin with the raw amino-acid sequence, 353 residues long: Variable large protein 17 (353 aa).

The first 18 residues, 1-18 (MRKRISAIIMTLFMVLVS), serve as a signal peptide directing secretion. Cys-19 carries N-palmitoyl cysteine lipidation. The S-diacylglycerol cysteine moiety is linked to residue Cys-19. A disordered region spans residues 332–353 (EDKSVEATNTAEATTSGQQAKN). The segment covering 337–353 (EATNTAEATTSGQQAKN) has biased composition (polar residues).

This sequence belongs to the variable large protein (Vlp) family. Delta subfamily.

Its subcellular location is the cell outer membrane. The Vlp and Vsp proteins are antigenically distinct proteins, only one vlp or vsp gene is transcriptionally active at any one time. Switching between these genes is a mechanism of host immune response evasion. The protein is Variable large protein 17 of Borrelia hermsii.